The sequence spans 203 residues: Snake venom metalloproteinase adamalysin-2 (203 aa).

Positions 7–203 (RYIELVVVAD…YKPQCILNKP (197 aa)) constitute a Peptidase M12B domain. Ca(2+) contacts are provided by glutamate 10 and aspartate 94. Cystine bridges form between cysteine 118–cysteine 198 and cysteine 158–cysteine 165. Histidine 143 contacts Zn(2+). The active site involves glutamate 144. Positions 147 and 153 each coordinate Zn(2+). Ca(2+) is bound by residues cysteine 198 and asparagine 201.

Belongs to the venom metalloproteinase (M12B) family. P-I subfamily. In terms of assembly, monomer. Requires Zn(2+) as cofactor. In terms of tissue distribution, expressed by the venom gland.

The protein resides in the secreted. It catalyses the reaction Cleavage of 1-Phe-|-Val-2, 5-His-|-Leu-6, 14-Ala-|-Leu-15, 15-Leu-|-Tyr-16, and 16-Tyr-|-Leu-17 of insulin B chain.. In terms of biological role, has no significant hemorrhagic activity, but inactivates serpins by limited proteolysis of their reactive-site loops. The polypeptide is Snake venom metalloproteinase adamalysin-2 (Crotalus adamanteus (Eastern diamondback rattlesnake)).